Reading from the N-terminus, the 284-residue chain is RNase adapter protein RapZ (284 aa).

Position 8 to 15 (8 to 15 (GRSGSGKS)) interacts with ATP. 56 to 59 (DVRN) contacts GTP. Residues 266 to 284 (RSRGKNVQSRHRTLEKRKP) are RNA-binding.

This sequence belongs to the RapZ-like family. RapZ subfamily. As to quaternary structure, homotrimer.

Modulates the synthesis of GlmS, by affecting the processing and stability of the regulatory small RNA GlmZ. When glucosamine-6-phosphate (GlcN6P) concentrations are high in the cell, RapZ binds GlmZ and targets it to cleavage by RNase E. Consequently, GlmZ is inactivated and unable to activate GlmS synthesis. Under low GlcN6P concentrations, RapZ is sequestered and inactivated by an other regulatory small RNA, GlmY, preventing GlmZ degradation and leading to synthesis of GlmS. The protein is RNase adapter protein RapZ of Shigella dysenteriae serotype 1 (strain Sd197).